The primary structure comprises 335 residues: MSSRMAGATLLRHLGPRLFAAEPVYSGLAASARGVMPAAARIFPARMASTSSAGADVKEGAAEKLPEPAATAAAAATDPQNKKAVVSYWGIQPPKLVKEDGTEWKWLSFRPWDTYTSDTSIDVTKHHEPKGLPDKLAYWTVRSLAVPRDLFFQRRHASHALLLETVAGVPGMVGGMLLHLRSLRRFEQSGGWIRALLEEAENERMHLMTFLEVMQPRWWERALVLAAQGVFFNAYFVGYLVSPKFAHRFVGYLEEEAVSSYTEYLKDLEAGKIENTPAPAIAIDYWRLPADATLKDVVTVIRADEAHHRDLNHFASDIQQQGMKLKDTPAPIGYH.

A mitochondrion-targeting transit peptide spans 1–47 (MSSRMAGATLLRHLGPRLFAAEPVYSGLAASARGVMPAAARIFPARM). Residues 160 to 180 (ALLLETVAGVPGMVGGMLLHL) traverse the membrane as a helical segment. Residues Glu164, Glu203, and His206 each coordinate Fe cation. The chain crosses the membrane as a helical span at residues 222–242 (ALVLAAQGVFFNAYFVGYLVS). Fe cation contacts are provided by Glu254, Glu305, and His308.

The protein belongs to the alternative oxidase family. It depends on Fe cation as a cofactor.

The protein localises to the mitochondrion inner membrane. It carries out the reaction 2 a ubiquinol + O2 = 2 a ubiquinone + 2 H2O. In terms of biological role, catalyzes the cyanide-resistant oxidation of ubiquinol and the reduction of molecular oxygen to water, but does not translocate protons and consequently is not linked to oxidative phosphorylation. May increase respiration when the cytochrome respiratory pathway is restricted, or in response to low temperatures. The chain is Ubiquinol oxidase 1b, mitochondrial from Oryza sativa subsp. japonica (Rice).